The following is a 260-amino-acid chain: Proteasome subunit alpha (260 aa).

It belongs to the peptidase T1A family. In terms of assembly, the 20S proteasome core is composed of 14 alpha and 14 beta subunits that assemble into four stacked heptameric rings, resulting in a barrel-shaped structure. The two inner rings, each composed of seven catalytic beta subunits, are sandwiched by two outer rings, each composed of seven alpha subunits. The catalytic chamber with the active sites is on the inside of the barrel. Has a gated structure, the ends of the cylinder being occluded by the N-termini of the alpha-subunits. Is capped at one or both ends by the proteasome regulatory ATPase, PAN.

The protein resides in the cytoplasm. The formation of the proteasomal ATPase PAN-20S proteasome complex, via the docking of the C-termini of PAN into the intersubunit pockets in the alpha-rings, triggers opening of the gate for substrate entry. Interconversion between the open-gate and close-gate conformations leads to a dynamic regulation of the 20S proteasome proteolysis activity. In terms of biological role, component of the proteasome core, a large protease complex with broad specificity involved in protein degradation. In Pyrococcus abyssi (strain GE5 / Orsay), this protein is Proteasome subunit alpha.